We begin with the raw amino-acid sequence, 350 residues long: MSKLGVVSWGAYIPRYRVRTEEVSRIWGDDPLRIVDMYLVDEKSVEGIDEDAVTIAVEAARRAIRRGGIDPRKIGAVYVGTESKPYAVKPISSILIDALGLTNNVFAVDMEFACKAGSDGLVAAIGLVEAGRVEYGMTVGTDTSQGEPGEHLEYSASSGGVALIVGKDGVAAELEAMYAFVSDTPDFWRREGSPYPMHGEGFTGEPAYFRHVIGAAKGLMEKYGYKPSDFTYVVFHQPNGRFPVRAASMLNIPLDKVKPGIVVTHIGNTYNASALMGFAKVLDIAKPGDKILLVPFGSGAGSNAFVFTVTDVVKDRQKMGVPTVEEMLQDKILVDYAQYLKMRKMIKLFE.

Residue aspartate 30 coordinates (3S)-3-hydroxy-3-methylglutaryl-CoA. Glutamate 82 functions as the Proton donor/acceptor in the catalytic mechanism. (3S)-3-hydroxy-3-methylglutaryl-CoA is bound by residues cysteine 114, serine 155, threonine 203, and histidine 236. The Acyl-thioester intermediate role is filled by cysteine 114. Residue histidine 236 is the Proton donor/acceptor of the active site. Arginine 241 is a binding site for CoA. (3S)-3-hydroxy-3-methylglutaryl-CoA is bound by residues arginine 245, asparagine 268, and serine 298.

This sequence belongs to the thiolase-like superfamily. Archaeal HMG-CoA synthase family. As to quaternary structure, interacts with acetoacetyl-CoA thiolase that catalyzes the precedent step in the pathway and with a DUF35 protein. The acetoacetyl-CoA thiolase/HMG-CoA synthase complex channels the intermediate via a fused CoA-binding site, which allows for efficient coupling of the endergonic thiolase reaction with the exergonic HMGCS reaction.

The enzyme catalyses acetoacetyl-CoA + acetyl-CoA + H2O = (3S)-3-hydroxy-3-methylglutaryl-CoA + CoA + H(+). It participates in metabolic intermediate biosynthesis; (R)-mevalonate biosynthesis; (R)-mevalonate from acetyl-CoA: step 2/3. Its function is as follows. Catalyzes the condensation of acetyl-CoA with acetoacetyl-CoA to form 3-hydroxy-3-methylglutaryl-CoA (HMG-CoA). Functions in the mevalonate (MVA) pathway leading to isopentenyl diphosphate (IPP), a key precursor for the biosynthesis of isoprenoid compounds that are building blocks of archaeal membrane lipids. The protein is Hydroxymethylglutaryl-CoA synthase of Pyrobaculum calidifontis (strain DSM 21063 / JCM 11548 / VA1).